The chain runs to 221 residues: Ependymin-1 (221 aa).

An N-terminal signal peptide occupies residues 1–21 (MQAFAVAALSIWLCLGATTLA). N-linked (GlcNAc...) asparagine glycosylation is found at asparagine 33, asparagine 73, and asparagine 97.

The protein belongs to the ependymin family. Post-translationally, binds calcium through the terminal sialic acids. EPDs are synthesized in the meninx and secreted in the cerebrospinal fluid.

It localises to the secreted. Its function is as follows. May play a role in neural plasticity. May be involved during axon regeneration. This Oncorhynchus mykiss (Rainbow trout) protein is Ependymin-1 (epd1).